Here is a 258-residue protein sequence, read N- to C-terminus: Indole-3-glycerol phosphate synthase (258 aa).

Belongs to the TrpC family.

It catalyses the reaction 1-(2-carboxyphenylamino)-1-deoxy-D-ribulose 5-phosphate + H(+) = (1S,2R)-1-C-(indol-3-yl)glycerol 3-phosphate + CO2 + H2O. Its pathway is amino-acid biosynthesis; L-tryptophan biosynthesis; L-tryptophan from chorismate: step 4/5. In Campylobacter jejuni (strain RM1221), this protein is Indole-3-glycerol phosphate synthase.